The primary structure comprises 110 residues: MALWMRLLPLLALLALWAPAPTRAFVNQHLCGSHLVEALYLVCGERGFFYTPKARREVEDLQVRDVELAGAPGEGGLQPLALEGALQKRGIVEQCCTSICSLYQLENYCN.

A signal peptide spans 1–24 (MALWMRLLPLLALLALWAPAPTRA). 3 cysteine pairs are disulfide-bonded: Cys-31–Cys-96, Cys-43–Cys-109, and Cys-95–Cys-100. Residues 57 to 87 (EVEDLQVRDVELAGAPGEGGLQPLALEGALQ) constitute a propeptide, c peptide.

Belongs to the insulin family. As to quaternary structure, heterodimer of a B chain and an A chain linked by two disulfide bonds.

The protein localises to the secreted. Functionally, insulin decreases blood glucose concentration. It increases cell permeability to monosaccharides, amino acids and fatty acids. It accelerates glycolysis, the pentose phosphate cycle, and glycogen synthesis in liver. The sequence is that of Insulin (INS) from Canis lupus familiaris (Dog).